Consider the following 116-residue polypeptide: NADPH-dependent 7-cyano-7-deazaguanine reductase (116 aa).

Cys31 acts as the Thioimide intermediate in catalysis. The Proton donor role is filled by Asp38. Substrate-binding positions include 53–55 and 72–73; these read VEL and YE.

It belongs to the GTP cyclohydrolase I family. QueF type 1 subfamily.

The protein resides in the cytoplasm. It carries out the reaction 7-aminomethyl-7-carbaguanine + 2 NADP(+) = 7-cyano-7-deazaguanine + 2 NADPH + 3 H(+). It participates in tRNA modification; tRNA-queuosine biosynthesis. In terms of biological role, catalyzes the NADPH-dependent reduction of 7-cyano-7-deazaguanine (preQ0) to 7-aminomethyl-7-deazaguanine (preQ1). In Chloroherpeton thalassium (strain ATCC 35110 / GB-78), this protein is NADPH-dependent 7-cyano-7-deazaguanine reductase.